Here is a 226-residue protein sequence, read N- to C-terminus: 7-cyano-7-deazaguanine synthase (226 aa).

8 to 18 (ISGGLDSTTCL) provides a ligand contact to ATP. C188, C198, C201, and C204 together coordinate Zn(2+).

The protein belongs to the QueC family. Zn(2+) is required as a cofactor.

The enzyme catalyses 7-carboxy-7-deazaguanine + NH4(+) + ATP = 7-cyano-7-deazaguanine + ADP + phosphate + H2O + H(+). It participates in purine metabolism; 7-cyano-7-deazaguanine biosynthesis. Its function is as follows. Catalyzes the ATP-dependent conversion of 7-carboxy-7-deazaguanine (CDG) to 7-cyano-7-deazaguanine (preQ(0)). This chain is 7-cyano-7-deazaguanine synthase, found in Coxiella burnetii (strain RSA 331 / Henzerling II).